A 185-amino-acid polypeptide reads, in one-letter code: Peptidyl-tRNA hydrolase (185 aa).

Tyr-14 serves as a coordination point for tRNA. His-19 acts as the Proton acceptor in catalysis. The tRNA site is built by Tyr-64, Asn-66, and Asn-112.

The protein belongs to the PTH family. As to quaternary structure, monomer.

It localises to the cytoplasm. The catalysed reaction is an N-acyl-L-alpha-aminoacyl-tRNA + H2O = an N-acyl-L-amino acid + a tRNA + H(+). Hydrolyzes ribosome-free peptidyl-tRNAs (with 1 or more amino acids incorporated), which drop off the ribosome during protein synthesis, or as a result of ribosome stalling. In terms of biological role, catalyzes the release of premature peptidyl moieties from peptidyl-tRNA molecules trapped in stalled 50S ribosomal subunits, and thus maintains levels of free tRNAs and 50S ribosomes. The chain is Peptidyl-tRNA hydrolase from Exiguobacterium sibiricum (strain DSM 17290 / CCUG 55495 / CIP 109462 / JCM 13490 / 255-15).